Consider the following 338-residue polypeptide: MTTPVASMAVIGAGSYGTALAITLARNGHPVVLWGHDPAHIAALEAARCNQAFLPDVRFPDTLSLESDLSRTLSASRDVLVVVPSHVFGDVLRQLRPHLRPDARLVWATKGLEAETGRLLQDVACEALGPDIPLAVISGPTFAKELAAGLPTAIAVASQDAAFAEVLQQLLHCGKSFRVYRNPDFIGVQLGGAVKNVIAIGAGMSDGIGFGANARTALITRGLAEMSRLGVALGADPATFMGMAGLGDLVLTCTDNQSRNRRFGIMLGQGMGVDEAQVQIGQVVEGYRNTKEVMSLAQRYGVEMPITEQIYQVLYCHKDVREAALSLLGRASRDENAR.

Residues Ser15, Tyr16, His36, and Lys110 each coordinate NADPH. Residues Lys110, Gly139, and Thr141 each coordinate sn-glycerol 3-phosphate. NADPH is bound at residue Ala143. Sn-glycerol 3-phosphate is bound by residues Lys195, Asp248, Ser258, Arg259, and Asn260. Lys195 serves as the catalytic Proton acceptor. Arg259 provides a ligand contact to NADPH. Positions 283 and 285 each coordinate NADPH.

The protein belongs to the NAD-dependent glycerol-3-phosphate dehydrogenase family.

The protein resides in the cytoplasm. The catalysed reaction is sn-glycerol 3-phosphate + NAD(+) = dihydroxyacetone phosphate + NADH + H(+). It carries out the reaction sn-glycerol 3-phosphate + NADP(+) = dihydroxyacetone phosphate + NADPH + H(+). Its pathway is membrane lipid metabolism; glycerophospholipid metabolism. Catalyzes the reduction of the glycolytic intermediate dihydroxyacetone phosphate (DHAP) to sn-glycerol 3-phosphate (G3P), the key precursor for phospholipid synthesis. This Edwardsiella ictaluri (strain 93-146) protein is Glycerol-3-phosphate dehydrogenase [NAD(P)+].